The sequence spans 158 residues: PTS system fructose-specific EIIB component (158 aa).

The region spanning 1-98 (MKLVAVTSCP…AEAVVQKAVE (98 aa)) is the PTS EIIB type-2 domain. Cys9 acts as the Phosphocysteine intermediate in catalysis. A Phosphocysteine; by EIIA modification is found at Cys9. A disordered region spans residues 104 to 147 (KTGSVTFGSGDDGEDADVGADDSSDDADAAESDEPVRRGGDPEK). Positions 114–136 (DDGEDADVGADDSSDDADAAESD) are enriched in acidic residues. A compositionally biased stretch (basic and acidic residues) spans 137-147 (EPVRRGGDPEK).

It is found in the cytoplasm. It catalyses the reaction D-fructose(out) + N(pros)-phospho-L-histidyl-[protein] = D-fructose 1-phosphate(in) + L-histidyl-[protein]. The phosphoenolpyruvate-dependent sugar phosphotransferase system (sugar PTS), a major carbohydrate active transport system, catalyzes the phosphorylation of incoming sugar substrates concomitantly with their translocation across the cell membrane. The enzyme II PtfABC PTS system is involved in fructose transport. The chain is PTS system fructose-specific EIIB component from Haloferax volcanii (strain ATCC 29605 / DSM 3757 / JCM 8879 / NBRC 14742 / NCIMB 2012 / VKM B-1768 / DS2) (Halobacterium volcanii).